Consider the following 494-residue polypeptide: UPF0371 protein SPH_0451 (494 aa).

It belongs to the UPF0371 family.

The polypeptide is UPF0371 protein SPH_0451 (Streptococcus pneumoniae (strain Hungary19A-6)).